A 523-amino-acid chain; its full sequence is NAD(P)H-quinone oxidoreductase subunit 2 (523 aa).

13 consecutive transmembrane segments (helical) span residues 29–49, 57–77, 94–114, 128–148, 182–202, 223–243, 255–275, 291–311, 317–337, 345–365, 389–409, 424–444, and 477–497; these read AVAPEGAVLLAMLATLLVDLA, WVPPICYAGLGTALLLLALQW, LAIAFRAVVALSTLLSLMISW, AGILLAATLGGMLLCGATDLV, LLVGSAAAAVFLYGSSLLYGL, AALALVFVLATVAFKIAAVPF, PTPVVAFLSVGSKAAGFALAL, LLFTVLAVLSMTLGNVVALAQ, MLAYSSIGQAGFVMIGLVCGT, VLYTAAYLFMNLGAFACIILF, LGLSLCLLSLGGIPPMLGFFG, VLVVVGLITSVISIYYYIGVI, and VALVTCVVVTAVGGILSNPLF.

This sequence belongs to the complex I subunit 2 family. In terms of assembly, NDH-1 can be composed of about 15 different subunits; different subcomplexes with different compositions have been identified which probably have different functions.

It localises to the cellular thylakoid membrane. The enzyme catalyses a plastoquinone + NADH + (n+1) H(+)(in) = a plastoquinol + NAD(+) + n H(+)(out). The catalysed reaction is a plastoquinone + NADPH + (n+1) H(+)(in) = a plastoquinol + NADP(+) + n H(+)(out). Functionally, NDH-1 shuttles electrons from an unknown electron donor, via FMN and iron-sulfur (Fe-S) centers, to quinones in the respiratory and/or the photosynthetic chain. The immediate electron acceptor for the enzyme in this species is believed to be plastoquinone. Couples the redox reaction to proton translocation, and thus conserves the redox energy in a proton gradient. Cyanobacterial NDH-1 also plays a role in inorganic carbon-concentration. The sequence is that of NAD(P)H-quinone oxidoreductase subunit 2 from Synechococcus sp. (strain WH7803).